The following is a 237-amino-acid chain: Demethylmenaquinone methyltransferase (237 aa).

S-adenosyl-L-methionine-binding positions include T58, D79, and 107–108; that span reads NA.

It belongs to the class I-like SAM-binding methyltransferase superfamily. MenG/UbiE family.

The catalysed reaction is a 2-demethylmenaquinol + S-adenosyl-L-methionine = a menaquinol + S-adenosyl-L-homocysteine + H(+). It participates in quinol/quinone metabolism; menaquinone biosynthesis; menaquinol from 1,4-dihydroxy-2-naphthoate: step 2/2. In terms of biological role, methyltransferase required for the conversion of demethylmenaquinol (DMKH2) to menaquinol (MKH2). The chain is Demethylmenaquinone methyltransferase from Lactiplantibacillus plantarum (strain ATCC BAA-793 / NCIMB 8826 / WCFS1) (Lactobacillus plantarum).